Reading from the N-terminus, the 138-residue chain is Small ribosomal subunit protein bS16 (138 aa).

The interval 92 to 138 (QAAKREADAKQAAKEAAEAKAAAEAEAKAAAEAESADAGAEEAPAEA) is disordered. Over residues 94–122 (AKREADAKQAAKEAAEAKAAAEAEAKAAA) the composition is skewed to basic and acidic residues.

This sequence belongs to the bacterial ribosomal protein bS16 family.

The protein is Small ribosomal subunit protein bS16 of Synechococcus sp. (strain WH7803).